A 163-amino-acid chain; its full sequence is MIIESISGNIHDLPGEDLEDVHVESVVLPLADLTKRIQRVRSDHGTELGIRLAPGAPDLREGDILLRNERGIVVVRLEPTDVLVIAPVTVREMGVVAHNLGNRHLPAQFFGPAEPFPGLEGHDGVMVIQYDHTAEHYLEHLGVRHARMERSMPVPFRHAEHTH.

This sequence belongs to the UreE family.

The protein resides in the cytoplasm. In terms of biological role, involved in urease metallocenter assembly. Binds nickel. Probably functions as a nickel donor during metallocenter assembly. The sequence is that of Urease accessory protein UreE from Actinomyces naeslundii.